Here is a 197-residue protein sequence, read N- to C-terminus: Putative peptidyl-prolyl cis-trans isomerase (197 aa).

One can recognise a PPIase cyclophilin-type domain in the interval 14–195 (GEIKVVMHTN…HDVVIESIDV (182 aa)).

The protein belongs to the cyclophilin-type PPIase family.

The enzyme catalyses [protein]-peptidylproline (omega=180) = [protein]-peptidylproline (omega=0). Its function is as follows. PPIases accelerate the folding of proteins. It catalyzes the cis-trans isomerization of proline imidic peptide bonds in oligopeptides. This chain is Putative peptidyl-prolyl cis-trans isomerase, found in Staphylococcus aureus (strain COL).